The chain runs to 495 residues: Transcription termination/antitermination protein NusA (495 aa).

An S1 motif domain is found at 135–200 (GKIVTGTVKK…KTAQLFVTRS (66 aa)). The KH domain occupies 302–374 (NHSMDIAVEA…LDEEFAQILV (73 aa)).

This sequence belongs to the NusA family. As to quaternary structure, monomer. Binds directly to the core enzyme of the DNA-dependent RNA polymerase and to nascent RNA.

It localises to the cytoplasm. In terms of biological role, participates in both transcription termination and antitermination. The polypeptide is Transcription termination/antitermination protein NusA (Haemophilus influenzae (strain ATCC 51907 / DSM 11121 / KW20 / Rd)).